The chain runs to 335 residues: Glycerol-3-phosphate dehydrogenase [NAD(P)+] (335 aa).

NADPH contacts are provided by serine 10, phenylalanine 11, arginine 31, and lysine 105. Residues lysine 105, glycine 136, and serine 138 each coordinate sn-glycerol 3-phosphate. Alanine 140 serves as a coordination point for NADPH. The sn-glycerol 3-phosphate site is built by lysine 191, aspartate 244, serine 254, arginine 255, and asparagine 256. The active-site Proton acceptor is lysine 191. Arginine 255 serves as a coordination point for NADPH. Residues valine 279 and glutamate 281 each contribute to the NADPH site.

This sequence belongs to the NAD-dependent glycerol-3-phosphate dehydrogenase family.

Its subcellular location is the cytoplasm. The catalysed reaction is sn-glycerol 3-phosphate + NAD(+) = dihydroxyacetone phosphate + NADH + H(+). The enzyme catalyses sn-glycerol 3-phosphate + NADP(+) = dihydroxyacetone phosphate + NADPH + H(+). It functions in the pathway membrane lipid metabolism; glycerophospholipid metabolism. Functionally, catalyzes the reduction of the glycolytic intermediate dihydroxyacetone phosphate (DHAP) to sn-glycerol 3-phosphate (G3P), the key precursor for phospholipid synthesis. The polypeptide is Glycerol-3-phosphate dehydrogenase [NAD(P)+] (Leptospira borgpetersenii serovar Hardjo-bovis (strain L550)).